We begin with the raw amino-acid sequence, 249 residues long: 2,3-bisphosphoglycerate-dependent phosphoglycerate mutase (249 aa).

Residues 8–15 (RHGQSVWN), 21–22 (TG), R60, 87–90 (ERHY), K98, 114–115 (RR), and 183–184 (GN) each bind substrate. The Tele-phosphohistidine intermediate role is filled by H9. The Proton donor/acceptor role is filled by E87.

It belongs to the phosphoglycerate mutase family. BPG-dependent PGAM subfamily. Homodimer.

The enzyme catalyses (2R)-2-phosphoglycerate = (2R)-3-phosphoglycerate. Its pathway is carbohydrate degradation; glycolysis; pyruvate from D-glyceraldehyde 3-phosphate: step 3/5. Its function is as follows. Catalyzes the interconversion of 2-phosphoglycerate and 3-phosphoglycerate. This chain is 2,3-bisphosphoglycerate-dependent phosphoglycerate mutase, found in Solidesulfovibrio magneticus (strain ATCC 700980 / DSM 13731 / RS-1) (Desulfovibrio magneticus).